Consider the following 412-residue polypeptide: Serine--tRNA ligase (412 aa).

Thr-228–Glu-230 is a binding site for L-serine. ATP is bound at residue Arg-259–Glu-261. Glu-282 is an L-serine binding site. ATP is bound at residue Glu-346–Ser-349. Ser-380 lines the L-serine pocket.

It belongs to the class-II aminoacyl-tRNA synthetase family. Type-1 seryl-tRNA synthetase subfamily. As to quaternary structure, homodimer. The tRNA molecule binds across the dimer.

The protein resides in the cytoplasm. The catalysed reaction is tRNA(Ser) + L-serine + ATP = L-seryl-tRNA(Ser) + AMP + diphosphate + H(+). It carries out the reaction tRNA(Sec) + L-serine + ATP = L-seryl-tRNA(Sec) + AMP + diphosphate + H(+). It participates in aminoacyl-tRNA biosynthesis; selenocysteinyl-tRNA(Sec) biosynthesis; L-seryl-tRNA(Sec) from L-serine and tRNA(Sec): step 1/1. In terms of biological role, catalyzes the attachment of serine to tRNA(Ser). Is also able to aminoacylate tRNA(Sec) with serine, to form the misacylated tRNA L-seryl-tRNA(Sec), which will be further converted into selenocysteinyl-tRNA(Sec). This chain is Serine--tRNA ligase, found in Aliarcobacter butzleri (strain RM4018) (Arcobacter butzleri).